The chain runs to 268 residues: Taurine import ATP-binding protein TauB (268 aa).

In terms of domain architecture, ABC transporter spans 4–236 (LSIENISMRF…MGVNADLREV (233 aa)). Residue 41–48 (GPSGCGKT) coordinates ATP.

The protein belongs to the ABC transporter superfamily. Taurine importer (TC 3.A.1.17.1) family. In terms of assembly, the complex is composed of two ATP-binding proteins (TauB), two transmembrane proteins (TauC) and a solute-binding protein (TauA).

It is found in the cell inner membrane. It carries out the reaction taurine(out) + ATP + H2O = taurine(in) + ADP + phosphate + H(+). Its function is as follows. Part of the ABC transporter complex TauABC involved in taurine import. Responsible for energy coupling to the transport system. The protein is Taurine import ATP-binding protein TauB of Ruegeria pomeroyi (strain ATCC 700808 / DSM 15171 / DSS-3) (Silicibacter pomeroyi).